A 125-amino-acid chain; its full sequence is MLVIILGVIGLLASSNLVSSSTSTRVGGHLPLTFDPPENELGYWYTYVESCRFCWDCEDGVCTSRVWGNNSTSIVENDYVKYCEVSRWGDQCRYDVEEHIYYTMNCSDPKPWNPYKIAKEGVEKG.

A signal peptide spans 1-20 (MLVIILGVIGLLASSNLVSS). N-linked (GlcNAc...) asparagine; by host glycosylation is found at asparagine 69, asparagine 70, and asparagine 105.

It belongs to the asfivirus MGF 110 family.

Functionally, plays a role in virus cell tropism, and may be required for efficient virus replication in macrophages. The polypeptide is Protein MGF 110-7L (Ornithodoros (relapsing fever ticks)).